Reading from the N-terminus, the 279-residue chain is Zinc-finger homeodomain protein 1 (279 aa).

The segment covering 1 to 13 (MDFDDHDDGDEEM) has biased composition (acidic residues). The interval 1 to 47 (MDFDDHDDGDEEMPPMPVSSSYETPPQHGLAGGGMAPKPPGEIGSRV) is disordered. The ZF-HD dimerization-type; degenerate zinc finger occupies 57–106 (YRECLKNHAVGIGGHAVDGCGEFMAAGEEGTIDALRCAACNCHRNFHRKE). The segment at 168–190 (RPLALPSTSHSGRDDGDDLSGMV) is disordered. Positions 215–278 (KKRFRTKFTQ…NNKHTLGKKL (64 aa)) form a DNA-binding region, homeobox.

In terms of assembly, homo- and heterodimer with other ZFHD proteins.

It is found in the nucleus. In terms of biological role, putative transcription factor. The protein is Zinc-finger homeodomain protein 1 (ZHD1) of Oryza sativa subsp. japonica (Rice).